Reading from the N-terminus, the 32-residue chain is MASEIFGIAAVFWVLIPVGLLGGVLLLKLQGD.

Residues Ala-9–Leu-27 form a helical membrane-spanning segment.

Belongs to the PetM family. The 4 large subunits of the cytochrome b6-f complex are cytochrome b6, subunit IV (17 kDa polypeptide, PetD), cytochrome f and the Rieske protein, while the 4 small subunits are PetG, PetL, PetM and PetN. The complex functions as a dimer.

It is found in the cellular thylakoid membrane. Component of the cytochrome b6-f complex, which mediates electron transfer between photosystem II (PSII) and photosystem I (PSI), cyclic electron flow around PSI, and state transitions. This chain is Cytochrome b6-f complex subunit 7, found in Prochlorococcus marinus (strain NATL1A).